The primary structure comprises 353 residues: 4-hydroxy-3-methylbut-2-en-1-yl diphosphate synthase (flavodoxin) (353 aa).

[4Fe-4S] cluster contacts are provided by C268, C271, C303, and E310.

Belongs to the IspG family. The cofactor is [4Fe-4S] cluster.

The enzyme catalyses (2E)-4-hydroxy-3-methylbut-2-enyl diphosphate + oxidized [flavodoxin] + H2O + 2 H(+) = 2-C-methyl-D-erythritol 2,4-cyclic diphosphate + reduced [flavodoxin]. The protein operates within isoprenoid biosynthesis; isopentenyl diphosphate biosynthesis via DXP pathway; isopentenyl diphosphate from 1-deoxy-D-xylulose 5-phosphate: step 5/6. In terms of biological role, converts 2C-methyl-D-erythritol 2,4-cyclodiphosphate (ME-2,4cPP) into 1-hydroxy-2-methyl-2-(E)-butenyl 4-diphosphate. The protein is 4-hydroxy-3-methylbut-2-en-1-yl diphosphate synthase (flavodoxin) of Ruminiclostridium cellulolyticum (strain ATCC 35319 / DSM 5812 / JCM 6584 / H10) (Clostridium cellulolyticum).